A 355-amino-acid polypeptide reads, in one-letter code: NADH-quinone oxidoreductase subunit H (355 aa).

A run of 8 helical transmembrane segments spans residues 25-45 (VVRILVVSVVILLCVAYLILW), 91-111 (WLYLIAPIMTVVPAFAVWAVI), 126-146 (LLYAMAISSIGVYAVILAGWA), 170-190 (MGFALVLVLMTAGSLNLSEIV), 205-225 (FLSWNWLPLLPAFVVYFISGI), 253-273 (MAFALFFLAEYINMIVISALA), 290-310 (FIPGIFWLVLKVFALLSVFIW), and 330-350 (VFLPVTVIWVVVVGCWMMSPL).

The protein belongs to the complex I subunit 1 family. As to quaternary structure, NDH-1 is composed of 14 different subunits. Subunits NuoA, H, J, K, L, M, N constitute the membrane sector of the complex.

It localises to the cell inner membrane. The catalysed reaction is a quinone + NADH + 5 H(+)(in) = a quinol + NAD(+) + 4 H(+)(out). In terms of biological role, NDH-1 shuttles electrons from NADH, via FMN and iron-sulfur (Fe-S) centers, to quinones in the respiratory chain. The immediate electron acceptor for the enzyme in this species is believed to be ubiquinone. Couples the redox reaction to proton translocation (for every two electrons transferred, four hydrogen ions are translocated across the cytoplasmic membrane), and thus conserves the redox energy in a proton gradient. This subunit may bind ubiquinone. The sequence is that of NADH-quinone oxidoreductase subunit H from Burkholderia cenocepacia (strain ATCC BAA-245 / DSM 16553 / LMG 16656 / NCTC 13227 / J2315 / CF5610) (Burkholderia cepacia (strain J2315)).